The following is a 658-amino-acid chain: DNA-binding protein Rfx5 (658 aa).

Residues 1-10 show a composition bias toward basic and acidic residues; the sequence is MAEDKPDAKS. The tract at residues 1-28 is disordered; sequence MAEDKPDAKSPKTGARPQGGADAGEPTT. At A2 the chain carries N-acetylalanine. A Phosphoserine modification is found at S10. Positions 24 to 89 are N-terminal domain; the sequence is GEPTTLLQRL…PSLLSNEEYM (66 aa). Residues 61–65 are leucine-rich region; critical for dimer formation and for interaction with RFXAP; it reads LYLYL. Residues 91–167 constitute a DNA-binding region (RFX-type winged-helix); that stretch reads AYRWIRNHLE…YCYSGIRRKT (77 aa). The PxLPxI/L motif; mediates interaction with RFXANK signature appears at 172–177; it reads PPLPGL. Residue S184 is modified to Phosphoserine. 4 disordered regions span residues 250-315, 382-422, 443-602, and 624-658; these read LAEE…SSVP, AGPG…GLGA, VPPR…DKIP, and KGEA…ATPP. Residues 277 to 309 show a composition bias toward basic and acidic residues; sequence GPKKPERPAQPPKEQEARAGTDLPGRAERKKSV. Composition is skewed to gly residues over residues 382–398 and 406–422; these read AGPG…GPGP and PGLG…GLGA. Composition is skewed to basic and acidic residues over residues 465 to 476 and 489 to 498; these read PRPHDKGIKRTA and PVKEMKHETQ. A compositionally biased stretch (basic residues) spans 506–516; the sequence is KRKRGRPRKKP. Residues 648–658 are compositionally biased toward basic and acidic residues; that stretch reads PEHKDPKATPP.

Belongs to the RFX family. Homodimer. The RFX heterotetrameric complex consists of 2 molecules of RFX5 and one each of RFXAP and RFX-B/RFXANK; with each subunit representing a separate complementation group. Interacts (via PxLPxI/L motif) with RFXANK (via ankyrin repeats); the interaction is direct. RFX forms cooperative DNA binding complexes with X2BP and CBF/NF-Y. RFX associates with CIITA to form an active transcriptional complex. In terms of processing, phosphorylated.

It is found in the nucleus. Its function is as follows. Activates transcription from class II MHC promoters. Recognizes X-boxes. Mediates cooperative binding between RFX and NF-Y. RFX binds the X1 box of MHC-II promoters. This is DNA-binding protein Rfx5 (Rfx5) from Mus musculus (Mouse).